A 301-amino-acid chain; its full sequence is Ribonuclease HIII (301 aa).

The RNase H type-2 domain maps to 84-301 (ASAIGSDEVG…TEKAARIAKK (218 aa)). 3 residues coordinate a divalent metal cation: Asp90, Glu91, and Asp195.

This sequence belongs to the RNase HII family. RnhC subfamily. Mn(2+) serves as cofactor. The cofactor is Mg(2+).

The protein localises to the cytoplasm. It carries out the reaction Endonucleolytic cleavage to 5'-phosphomonoester.. Functionally, endonuclease that specifically degrades the RNA of RNA-DNA hybrids. The polypeptide is Ribonuclease HIII (Geobacillus sp. (strain WCH70)).